Consider the following 135-residue polypeptide: Fatty acid-binding protein homolog 6 (135 aa).

Residues R110 and 130–132 (REY) contribute to the a fatty acid site.

The protein belongs to the calycin superfamily. Fatty-acid binding protein (FABP) family.

This Caenorhabditis elegans protein is Fatty acid-binding protein homolog 6 (lbp-6).